A 709-amino-acid chain; its full sequence is Protein SOSEKI 3 (709 aa).

Residues 8-101 (SSVQVLYQLS…YVLRASELFD (94 aa)) are DIX-like oligomerization domain. Disordered stretches follow at residues 242 to 266 (LHTP…AKRM), 315 to 344 (RDGR…AEQS), 358 to 393 (GGSS…KTPC), 411 to 439 (PSPA…NRPS), and 506 to 560 (DSPT…DTKP). The span at 329–342 (ELREVQNEKEKEAE) shows a compositional bias: basic and acidic residues. Residues 417 to 436 (NKAHSSLDRQEIPPQEECKN) show a composition bias toward basic and acidic residues. Polar residues predominate over residues 529–544 (VKTSNSLPRVKTTTSP). The C2HC/C3H-type zinc finger occupies 663-692 (ILQECSTCGRTFKPDSLQVHMRGCHPPQYA). Zn(2+)-binding residues include cysteine 667, cysteine 670, histidine 682, and cysteine 686.

This sequence belongs to the SOSEKI family. In terms of assembly, homodimer. Forms long polymer filaments with other SOKs proteins polymers crucial for polar localization and biological activity. It depends on Zn(2+) as a cofactor.

Its subcellular location is the cell membrane. Functionally, SOSEKI proteins locally interpret global polarity cues and can influence cell division orientation to coordinate cell polarization relative to body axes. The polypeptide is Protein SOSEKI 3 (Physcomitrium patens (Spreading-leaved earth moss)).